The chain runs to 319 residues: Acetyl-coenzyme A carboxylase carboxyl transferase subunit alpha (319 aa).

The region spanning 35 to 296 (NIDEEVHRLR…KAQLLEDLAD (262 aa)) is the CoA carboxyltransferase C-terminal domain.

It belongs to the AccA family. Acetyl-CoA carboxylase is a heterohexamer composed of biotin carboxyl carrier protein (AccB), biotin carboxylase (AccC) and two subunits each of ACCase subunit alpha (AccA) and ACCase subunit beta (AccD).

It localises to the cytoplasm. It carries out the reaction N(6)-carboxybiotinyl-L-lysyl-[protein] + acetyl-CoA = N(6)-biotinyl-L-lysyl-[protein] + malonyl-CoA. Its pathway is lipid metabolism; malonyl-CoA biosynthesis; malonyl-CoA from acetyl-CoA: step 1/1. Its function is as follows. Component of the acetyl coenzyme A carboxylase (ACC) complex. First, biotin carboxylase catalyzes the carboxylation of biotin on its carrier protein (BCCP) and then the CO(2) group is transferred by the carboxyltransferase to acetyl-CoA to form malonyl-CoA. This chain is Acetyl-coenzyme A carboxylase carboxyl transferase subunit alpha, found in Salmonella arizonae (strain ATCC BAA-731 / CDC346-86 / RSK2980).